A 177-amino-acid chain; its full sequence is Large ribosomal subunit protein uL6 (177 aa).

The protein belongs to the universal ribosomal protein uL6 family. Part of the 50S ribosomal subunit.

Its function is as follows. This protein binds to the 23S rRNA, and is important in its secondary structure. It is located near the subunit interface in the base of the L7/L12 stalk, and near the tRNA binding site of the peptidyltransferase center. In Rhizobium meliloti (strain 1021) (Ensifer meliloti), this protein is Large ribosomal subunit protein uL6.